A 751-amino-acid polypeptide reads, in one-letter code: Zinc finger protein 337 (751 aa).

Residues 12 to 83 (LAFGDVTVDF…ERRRRPGPCA (72 aa)) enclose the KRAB domain. Over residues 101–116 (QRQQQLQFSDQSFQSD) the composition is skewed to low complexity. Residues 101-163 (QRQQQLQFSD…SSQGQRENPT (63 aa)) are disordered. The C2H2-type 1; degenerate zinc-finger motif lies at 180–202 (FKCAERGQDFSRKMMVIIHKKAH). 9 consecutive C2H2-type zinc fingers follow at residues 208–230 (FTCR…QNTH), 236–258 (YVCS…QRTH), 264–286 (FLCK…ERTH), 292–314 (YECQ…LKAH), 320–342 (FVCK…KRIH), 348–370 (YRCQ…QRTH), 376–398 (FACR…QRTH), 404–426 (FVCK…QRTH), and 432–454 (FVCR…QITH). K458 is covalently cross-linked (Glycyl lysine isopeptide (Lys-Gly) (interchain with G-Cter in SUMO2)). C2H2-type zinc fingers lie at residues 460 to 482 (FVCK…QRTH), 488 to 510 (YGCR…LRAH), 516 to 538 (FFCR…QRTH), 544 to 566 (FMCK…QWTH), 572 to 594 (FNCK…QKTH), 600 to 622 (FICS…QLAH), 628 to 650 (FVCK…QRTH), 656 to 679 (FVCN…WRIH), 685 to 707 (FVCQ…ERIH), and 713 to 735 (YECQ…LKRH).

The protein belongs to the krueppel C2H2-type zinc-finger protein family.

It localises to the nucleus. Functionally, may be involved in transcriptional regulation. The sequence is that of Zinc finger protein 337 (ZNF337) from Homo sapiens (Human).